Reading from the N-terminus, the 116-residue chain is Ly-6/neurotoxin-like protein 1 (116 aa).

The signal sequence occupies residues 1-20; that stretch reads MTPLLTLILVVLMGLPLAQA. Residues 21–107 form the UPAR/Ly6 domain; that stretch reads LDCHVCAYNG…TPATLALAPI (87 aa). 5 cysteine pairs are disulfide-bonded: cysteine 23/cysteine 46, cysteine 26/cysteine 33, cysteine 39/cysteine 64, cysteine 68/cysteine 85, and cysteine 86/cysteine 91. Cysteine 91 carries the GPI-anchor amidated cysteine lipid modification. The propeptide at 92–116 is removed in mature form; that stretch reads NGTGLATPATLALAPILLATLWGLL.

In terms of assembly, interacts with nAChRs containing alpha-4:beta-2 (CHRNA4:CHRNB2) and alpha-7 (CHRNA7) subunits. Interacts with CHRNA4 probably in the endoplasmic reticulum prior to nAChR pentameric assembly. Interacts with KCNA2/Potassium voltage-gated channel subfamily A member 2.

Its subcellular location is the cell membrane. The protein localises to the cell projection. It is found in the dendrite. The protein resides in the endoplasmic reticulum. In terms of biological role, acts in different tissues through interaction to nicotinic acetylcholine receptors (nAChRs). The proposed role as modulator of nAChR activity seems to be dependent on the nAChR subtype and stoichiometry, and to involve an effect on nAChR trafficking and its cell surface expression, and on single channel properties of the nAChR inserted in the plasma membrane. Modulates functional properties of nicotinic acetylcholine receptors (nAChRs) to prevent excessive excitation, and hence neurodegeneration. Enhances desensitization by increasing both the rate and extent of desensitization of alpha-4:beta-2-containing nAChRs and slowing recovery from desensitization. Promotes large amplitude ACh-evoked currents through alpha-4:beta-2 nAChRs. Is involved in regulation of the nAChR pentameric assembly in the endoplasmic reticulum. Shifts stoichiometry from high sensitivity alpha-4(2):beta-2(3) to low sensitivity alpha-4(3):beta-2(2) nAChR. In vitro modulates alpha-3:beta-4-containing nAChRs. Reduces cell surface expression of (alpha-3:beta-4)(2):beta-4 and (alpha-3:beta-4)(2):alpha-5 nAChRs suggesting an interaction with nAChR alpha-3(-):(+)beta-4 subunit interfaces and an allosteric mode. Corresponding single channel effects characterized by decreased unitary conductance, altered burst proportions and enhanced desensitization/inactivation seem to depend on nAChR alpha:alpha subunit interfaces and are greater in (alpha-3:beta-2)(2):alpha-3 when compared to (alpha-3:beta-2)(2):alpha-5 nAChRs. Prevents plasticity in the primary visual cortex late in life. This chain is Ly-6/neurotoxin-like protein 1, found in Homo sapiens (Human).